A 97-amino-acid chain; its full sequence is MKIRPLHDRVIIKRIEAEAKSAGGIVLTGTAAQKSTRGEVLAVGTGRILDNGDVKALAVKVGDKVIFNEGYGVKTEKLDGQDVLILSETDILAIVEE.

It belongs to the GroES chaperonin family. Heptamer of 7 subunits arranged in a ring. Interacts with the chaperonin GroEL.

It localises to the cytoplasm. Together with the chaperonin GroEL, plays an essential role in assisting protein folding. The GroEL-GroES system forms a nano-cage that allows encapsulation of the non-native substrate proteins and provides a physical environment optimized to promote and accelerate protein folding. GroES binds to the apical surface of the GroEL ring, thereby capping the opening of the GroEL channel. The chain is Co-chaperonin GroES from Aeromonas hydrophila subsp. hydrophila (strain ATCC 7966 / DSM 30187 / BCRC 13018 / CCUG 14551 / JCM 1027 / KCTC 2358 / NCIMB 9240 / NCTC 8049).